Reading from the N-terminus, the 158-residue chain is SsrA-binding protein (158 aa).

Residues 133 to 158 (QLHDKRETEKKRDWNKEKGRLLRDKH) are disordered.

Belongs to the SmpB family.

It is found in the cytoplasm. Its function is as follows. Required for rescue of stalled ribosomes mediated by trans-translation. Binds to transfer-messenger RNA (tmRNA), required for stable association of tmRNA with ribosomes. tmRNA and SmpB together mimic tRNA shape, replacing the anticodon stem-loop with SmpB. tmRNA is encoded by the ssrA gene; the 2 termini fold to resemble tRNA(Ala) and it encodes a 'tag peptide', a short internal open reading frame. During trans-translation Ala-aminoacylated tmRNA acts like a tRNA, entering the A-site of stalled ribosomes, displacing the stalled mRNA. The ribosome then switches to translate the ORF on the tmRNA; the nascent peptide is terminated with the 'tag peptide' encoded by the tmRNA and targeted for degradation. The ribosome is freed to recommence translation, which seems to be the essential function of trans-translation. This Beijerinckia indica subsp. indica (strain ATCC 9039 / DSM 1715 / NCIMB 8712) protein is SsrA-binding protein.